The chain runs to 296 residues: Glycine--tRNA ligase alpha subunit (296 aa).

This sequence belongs to the class-II aminoacyl-tRNA synthetase family. Tetramer of two alpha and two beta subunits.

It localises to the cytoplasm. The enzyme catalyses tRNA(Gly) + glycine + ATP = glycyl-tRNA(Gly) + AMP + diphosphate. This Parasynechococcus marenigrum (strain WH8102) protein is Glycine--tRNA ligase alpha subunit.